A 100-amino-acid chain; its full sequence is Small ribosomal subunit protein uS14c (100 aa).

Belongs to the universal ribosomal protein uS14 family. In terms of assembly, part of the 30S ribosomal subunit.

The protein resides in the plastid. It localises to the chloroplast. Its function is as follows. Binds 16S rRNA, required for the assembly of 30S particles. This chain is Small ribosomal subunit protein uS14c, found in Guillardia theta (Cryptophyte).